Reading from the N-terminus, the 546-residue chain is Type II methyltransferase M.XhoI (546 aa).

This sequence belongs to the N(4)/N(6)-methyltransferase family.

It carries out the reaction a 2'-deoxyadenosine in DNA + S-adenosyl-L-methionine = an N(6)-methyl-2'-deoxyadenosine in DNA + S-adenosyl-L-homocysteine + H(+). A gamma subtype methylase, recognizes the double-stranded sequence 5'-CTCGAG-3', methylates A-5 on both strands, and protects the DNA from cleavage by the XhoI endonuclease. The polypeptide is Type II methyltransferase M.XhoI (Xanthomonas vasicola).